A 334-amino-acid polypeptide reads, in one-letter code: MGSIGSMGKPIEGFLVAAIQFPVPIVNSRKDIDHNIESIIRTLHATKAGYPGVELIIFPEYSTQGLNTAKWLSEEFLLDVPGKETELYAKACKEAKVYGVLSIMERNPDSNENPYNTAIIIDPQGKIILKYRKLFPWNPIEPWYPGDLGMPVCEGPGGSKLAVCICHDGMIPELAREAAYKGCNVYIRISGYSTQVNDQWILTNRSNAWHNLMYTVSVNLAGYDNVFYYFGEGQICNFDGTTLVQGHRNPWEIVTGEIYPKMADNARLSWGLENNIYNLGHRGYVAKPGGEHDAGLTYIKDLAAGKYKLPWEDHMKIKDGSIYGYPTTGGRFGK.

Residues 14–260 (FLVAAIQFPV…WEIVTGEIYP (247 aa)) enclose the CN hydrolase domain. Residue Glu60 is the Proton acceptor of the active site. Lys133 serves as the catalytic Proton donor. Residue Cys166 is the Nucleophile of the active site.

This sequence belongs to the carbon-nitrogen hydrolase superfamily. Aliphatic amidase family.

It carries out the reaction formamide + H2O = formate + NH4(+). Its function is as follows. Is an aliphatic amidase with a restricted substrate specificity, as it only hydrolyzes formamide. This chain is Formamidase, found in Helicobacter pylori (strain J99 / ATCC 700824) (Campylobacter pylori J99).